The following is a 465-amino-acid chain: Ribulose bisphosphate carboxylase large chain (465 aa).

Residue lysine 4 is modified to N6,N6,N6-trimethyllysine. Threonine 163 serves as a coordination point for substrate. The active-site Proton acceptor is the lysine 165. Lysine 167 contributes to the substrate binding site. The Mg(2+) site is built by lysine 191, aspartate 193, and glutamate 194. The residue at position 191 (lysine 191) is an N6-carboxylysine. The Proton acceptor role is filled by histidine 284. Substrate is bound by residues arginine 285, histidine 317, and serine 369.

Belongs to the RuBisCO large chain family. Type I subfamily. Heterohexadecamer of 8 large chains and 8 small chains; disulfide-linked. The disulfide link is formed within the large subunit homodimers. Requires Mg(2+) as cofactor. Post-translationally, the disulfide bond which can form in the large chain dimeric partners within the hexadecamer appears to be associated with oxidative stress and protein turnover.

Its subcellular location is the plastid. The protein resides in the chloroplast. It carries out the reaction 2 (2R)-3-phosphoglycerate + 2 H(+) = D-ribulose 1,5-bisphosphate + CO2 + H2O. The enzyme catalyses D-ribulose 1,5-bisphosphate + O2 = 2-phosphoglycolate + (2R)-3-phosphoglycerate + 2 H(+). In terms of biological role, ruBisCO catalyzes two reactions: the carboxylation of D-ribulose 1,5-bisphosphate, the primary event in carbon dioxide fixation, as well as the oxidative fragmentation of the pentose substrate in the photorespiration process. Both reactions occur simultaneously and in competition at the same active site. This Trochodendron aralioides (Wheel tree) protein is Ribulose bisphosphate carboxylase large chain.